Here is a 377-residue protein sequence, read N- to C-terminus: Flap endonuclease 1 (377 aa).

The segment at 1-105 is N-domain; the sequence is MGIKGLSQVI…GELAKRASRQ (105 aa). Asp34 contacts Mg(2+). Positions 47 and 71 each coordinate DNA. Position 87 (Asp87) interacts with Mg(2+). The disordered stretch occupies residues 96-115; sequence GELAKRASRQQKAREEREEA. The segment at 123–254 is I-domain; that stretch reads MVDKFAKRTV…ARAVELIRQH (132 aa). 4 residues coordinate Mg(2+): Glu159, Glu161, Asp180, and Asp182. Glu159 serves as a coordination point for DNA. DNA is bound by residues Gly232 and Asp234. Asp234 serves as a coordination point for Mg(2+). Residues 337–345 are interaction with PCNA; sequence PQGRLDSFF. A disordered region spans residues 350–377; the sequence is STKKEKEKPKAAAKRKRDTKSSAPKKKR. Residues 360 to 377 show a composition bias toward basic residues; it reads AAAKRKRDTKSSAPKKKR.

Belongs to the XPG/RAD2 endonuclease family. FEN1 subfamily. In terms of assembly, interacts with PCNA. Three molecules of rad2 bind to one PCNA trimer with each molecule binding to one PCNA monomer. PCNA stimulates the nuclease activity without altering cleavage specificity. The cofactor is Mg(2+). In terms of processing, phosphorylated. Phosphorylation upon DNA damage induces relocalization to the nuclear plasma.

Its subcellular location is the nucleus. The protein localises to the nucleolus. It localises to the nucleoplasm. The protein resides in the mitochondrion. In terms of biological role, structure-specific nuclease with 5'-flap endonuclease and 5'-3' exonuclease activities involved in DNA replication and repair. During DNA replication, cleaves the 5'-overhanging flap structure that is generated by displacement synthesis when DNA polymerase encounters the 5'-end of a downstream Okazaki fragment. It enters the flap from the 5'-end and then tracks to cleave the flap base, leaving a nick for ligation. Also involved in the long patch base excision repair (LP-BER) pathway, by cleaving within the apurinic/apyrimidinic (AP) site-terminated flap. Acts as a genome stabilization factor that prevents flaps from equilibrating into structures that lead to duplications and deletions. Also possesses 5'-3' exonuclease activity on nicked or gapped double-stranded DNA, and exhibits RNase H activity. Also involved in replication and repair of rDNA and in repairing mitochondrial DNA. In Schizosaccharomyces japonicus (strain yFS275 / FY16936) (Fission yeast), this protein is Flap endonuclease 1.